The chain runs to 365 residues: DNA polymerase IV (365 aa).

Positions Ile-7–Gly-188 constitute a UmuC domain. Mg(2+) is bound by residues Asp-11 and Asp-106. The active site involves Glu-107.

This sequence belongs to the DNA polymerase type-Y family. As to quaternary structure, monomer. The cofactor is Mg(2+).

Its subcellular location is the cytoplasm. It catalyses the reaction DNA(n) + a 2'-deoxyribonucleoside 5'-triphosphate = DNA(n+1) + diphosphate. Its function is as follows. Poorly processive, error-prone DNA polymerase involved in untargeted mutagenesis. Copies undamaged DNA at stalled replication forks, which arise in vivo from mismatched or misaligned primer ends. These misaligned primers can be extended by PolIV. Exhibits no 3'-5' exonuclease (proofreading) activity. May be involved in translesional synthesis, in conjunction with the beta clamp from PolIII. This Clostridioides difficile (strain 630) (Peptoclostridium difficile) protein is DNA polymerase IV.